A 346-amino-acid polypeptide reads, in one-letter code: Very-long-chain 3-oxoacyl-CoA reductase (346 aa).

A helical transmembrane segment spans residues 26-46; that stretch reads TASVLLVAGGWFVVSRVWTFL. NADP(+) is bound by residues Ile71, Asp126, Asp134, Asn153, Tyr220, Lys224, Ile253, and Ser255. Tyr220 serves as the catalytic Proton donor. Lys224 functions as the Lowers pKa of active site Tyr in the catalytic mechanism.

Belongs to the short-chain dehydrogenases/reductases (SDR) family.

The protein localises to the endoplasmic reticulum membrane. The catalysed reaction is a very-long-chain (3R)-3-hydroxyacyl-CoA + NADP(+) = a very-long-chain 3-oxoacyl-CoA + NADPH + H(+). Its pathway is lipid metabolism; fatty acid biosynthesis. In terms of biological role, component of the microsomal membrane bound fatty acid elongation system, which produces the 26-carbon very long-chain fatty acids (VLCFA) from palmitate. Catalyzes the reduction of the 3-ketoacyl-CoA intermediate that is formed in each cycle of fatty acid elongation. VLCFAs serve as precursors for ceramide and sphingolipids. The chain is Very-long-chain 3-oxoacyl-CoA reductase from Emericella nidulans (strain FGSC A4 / ATCC 38163 / CBS 112.46 / NRRL 194 / M139) (Aspergillus nidulans).